Reading from the N-terminus, the 544-residue chain is MFS-type transporter prx5 (544 aa).

The interval 1–28 is disordered; sequence MAVDTEKDSVQAGSPMETPGSPVDETTE. 13 consecutive transmembrane segments (helical) span residues 36–56, 90–110, 116–136, 148–168, 178–198, 221–241, 249–269, 290–310, 330–350, 361–381, 387–407, 418–438, and 505–525; these read WIVS…IPVV, LDHL…VASA, VIAG…AAFA, IGVV…PVTA, AWNF…LLFL, GAFL…WAGV, VVAP…WESF, FTAP…SSIL, VILS…LTCF, LTGS…VTPT, IAFI…SIAI, GVSG…ATSI, and AIFV…AACL.

It belongs to the major facilitator superfamily.

The protein localises to the cell membrane. In terms of biological role, MFS-type transporter; part of the gene cluster that mediates the biosynthesis of PR-toxin, a bicyclic sesquiterpene belonging to the eremophilane class and acting as a mycotoxin. The protein is MFS-type transporter prx5 of Penicillium rubens (strain ATCC 28089 / DSM 1075 / NRRL 1951 / Wisconsin 54-1255) (Penicillium chrysogenum).